The following is a 343-amino-acid chain: Holliday junction branch migration complex subunit RuvB (343 aa).

Positions Thr-4–Tyr-193 are large ATPase domain (RuvB-L). Residues Leu-32, Arg-33, Gly-74, Lys-77, Thr-78, Thr-79, Glu-140–Tyr-142, Arg-183, Tyr-193, and Arg-230 contribute to the ATP site. Thr-78 is a Mg(2+) binding site. The interval Glu-194–Asp-264 is small ATPAse domain (RuvB-S). A head domain (RuvB-H) region spans residues Ala-267–Lys-343. Positions 322 and 327 each coordinate DNA.

It belongs to the RuvB family. Homohexamer. Forms an RuvA(8)-RuvB(12)-Holliday junction (HJ) complex. HJ DNA is sandwiched between 2 RuvA tetramers; dsDNA enters through RuvA and exits via RuvB. An RuvB hexamer assembles on each DNA strand where it exits the tetramer. Each RuvB hexamer is contacted by two RuvA subunits (via domain III) on 2 adjacent RuvB subunits; this complex drives branch migration. In the full resolvosome a probable DNA-RuvA(4)-RuvB(12)-RuvC(2) complex forms which resolves the HJ.

The protein localises to the cytoplasm. It catalyses the reaction ATP + H2O = ADP + phosphate + H(+). The RuvA-RuvB-RuvC complex processes Holliday junction (HJ) DNA during genetic recombination and DNA repair, while the RuvA-RuvB complex plays an important role in the rescue of blocked DNA replication forks via replication fork reversal (RFR). RuvA specifically binds to HJ cruciform DNA, conferring on it an open structure. The RuvB hexamer acts as an ATP-dependent pump, pulling dsDNA into and through the RuvAB complex. RuvB forms 2 homohexamers on either side of HJ DNA bound by 1 or 2 RuvA tetramers; 4 subunits per hexamer contact DNA at a time. Coordinated motions by a converter formed by DNA-disengaged RuvB subunits stimulates ATP hydrolysis and nucleotide exchange. Immobilization of the converter enables RuvB to convert the ATP-contained energy into a lever motion, pulling 2 nucleotides of DNA out of the RuvA tetramer per ATP hydrolyzed, thus driving DNA branch migration. The RuvB motors rotate together with the DNA substrate, which together with the progressing nucleotide cycle form the mechanistic basis for DNA recombination by continuous HJ branch migration. Branch migration allows RuvC to scan DNA until it finds its consensus sequence, where it cleaves and resolves cruciform DNA. This Neisseria meningitidis serogroup C (strain 053442) protein is Holliday junction branch migration complex subunit RuvB.